The following is a 416-amino-acid chain: Phosphoglycerate kinase (416 aa).

Positions 23, 24, 25, 26, 38, 39, 62, 63, 65, 66, 121, 122, 168, and 169 each coordinate (2R)-3-phosphoglycerate. Gly212 contacts ADP. Position 212 (Gly212) interacts with CDP. AMP is bound by residues Ala213 and Lys214. Ala213 is an ATP binding site. Ala213 provides a ligand contact to Mg(2+). CDP is bound at residue Asp217. Asp217 contacts Mg(2+). Residue Lys218 coordinates AMP. Lys218 lines the ATP pocket. Gly236 provides a ligand contact to ADP. Gly236 serves as a coordination point for CDP. AMP contacts are provided by Gly237 and Gly311. Residues Gly237 and Gly311 each contribute to the ATP site. 2 residues coordinate CDP: Gly336 and Phe341. Phe341 contacts ADP. AMP is bound at residue Glu342. ATP is bound by residues Glu342, Asp373, and Thr374. Asp373 provides a ligand contact to Mg(2+).

The protein belongs to the phosphoglycerate kinase family. In terms of assembly, monomer. It depends on Mg(2+) as a cofactor.

Its subcellular location is the cytoplasm. The protein localises to the mitochondrion. The enzyme catalyses (2R)-3-phosphoglycerate + ATP = (2R)-3-phospho-glyceroyl phosphate + ADP. It functions in the pathway carbohydrate degradation; glycolysis; pyruvate from D-glyceraldehyde 3-phosphate: step 2/5. Its function is as follows. Catalyzes one of the two ATP producing reactions in the glycolytic pathway via the reversible conversion of 1,3-diphosphoglycerate to 3-phosphoglycerate. Both L- and D- forms of purine and pyrimidine nucleotides can be used as substrates, but the activity is much lower on pyrimidines. Negatively regulates the biosynthesis of acetyl-CoA from pyruvate in the mitochondrion. The protein is Phosphoglycerate kinase (PGK1) of Komagataella pastoris (Yeast).